A 298-amino-acid chain; its full sequence is MQHAETKKGVIYTAVSFIMWGLFPLYWKLLEQLPALDILAHRIIWSFVFMCIVLFFLRQWKIGWQELRSLKKNGGILSLFLASILISINWFVYIWAVNHGFLLEASLGYYINPLVSVLLGILFLKEKLNRLQLVAVSIAAAGVIISAFQYGSIPYVALLLAFSFGLYGLSKKRTSLPSAIGLTLETFMIMPIALGYLLFSGHVQPAGAESGGTWLLLFLAGVFTALPLLLFAEGAKRLPLYQVGILQYIAPTITLLIGLFVYHEPFSSSKAFTFSCIWAALLLFTFSQVKWKRASKSH.

A run of 9 helical transmembrane segments spans residues Val10–Leu30, Leu36–Phe56, Ile76–Ala96, Phe101–Ile121, Gly142–Phe162, Ala179–Phe199, Gly212–Ala232, Val243–His263, and Ala271–Trp291. EamA domains lie at Phe17–Phe148 and Phe162–Phe286.

It belongs to the EamA transporter family.

The protein localises to the cell membrane. This is an uncharacterized protein from Bacillus subtilis (strain 168).